The chain runs to 483 residues: Spermatogenesis-defective protein 39 homolog (483 aa).

It belongs to the SPE39 family. In terms of assembly, interacts with vps33b. As to expression, high levels detected in liver and small intestine of larvae at 5 days post-fertilization.

The protein localises to the cytoplasm. Its subcellular location is the cytoplasmic vesicle. It localises to the early endosome. The protein resides in the recycling endosome. It is found in the late endosome. In terms of biological role, proposed to be involved in endosomal maturation implicating in part vps33b. In epithelial cells, the vps33b:vipas39 complex may play a role in the apical rab11a-dependent recycling pathway and in the maintenance of the apical-basolateral polarity. May play a role in lysosomal trafficking, probably via association with the core HOPS complex in a discrete population of endosomes; the functions seems to be independent of vps33b. May play a role in vesicular trafficking during spermatogenesis. May be involved in direct or indirect transcriptional regulation of E-cadherin. The chain is Spermatogenesis-defective protein 39 homolog (vipas39) from Danio rerio (Zebrafish).